The primary structure comprises 371 residues: GPI mannosyltransferase 1 (371 aa).

8 consecutive transmembrane segments (helical) span residues Phe-64–Ile-84, Ala-120–Leu-140, Ile-144–Val-164, Ile-190–Gly-210, Ala-248–Phe-268, Val-290–Ser-310, Leu-318–Leu-338, and Ser-344–Leu-364.

The protein belongs to the PIGM family.

Its subcellular location is the endoplasmic reticulum membrane. The protein operates within glycolipid biosynthesis; glycosylphosphatidylinositol-anchor biosynthesis. Its function is as follows. Mannosyltransferase involved in glycosylphosphatidylinositol-anchor biosynthesis. Transfers the first alpha-1,4-mannose to GlcN-acyl-PI during GPI precursor assembly. Required for cell wall integrity. This chain is GPI mannosyltransferase 1 (gpi14), found in Schizosaccharomyces pombe (strain 972 / ATCC 24843) (Fission yeast).